A 1374-amino-acid polypeptide reads, in one-letter code: DNA-directed RNA polymerase subunit beta (1374 aa).

This sequence belongs to the RNA polymerase beta chain family. The RNAP catalytic core consists of 2 alpha, 1 beta, 1 beta' and 1 omega subunit. When a sigma factor is associated with the core the holoenzyme is formed, which can initiate transcription.

It catalyses the reaction RNA(n) + a ribonucleoside 5'-triphosphate = RNA(n+1) + diphosphate. Its function is as follows. DNA-dependent RNA polymerase catalyzes the transcription of DNA into RNA using the four ribonucleoside triphosphates as substrates. The chain is DNA-directed RNA polymerase subunit beta from Rickettsia typhi (strain ATCC VR-144 / Wilmington).